The following is a 412-amino-acid chain: COP9 signalosome complex subunit 4 (412 aa).

Positions 216 to 378 (EAAQRYYELS…GILHFEDSNP (163 aa)) constitute a PCI domain.

Belongs to the CSN4 family. Component of the CSN complex, probably composed of csn-1, csn-2, csn-3, csn-4, csn-5, csn-6 and csn-7. Within the complex it probably interacts directly with csn-2 and csn-4. In the complex, it probably interacts directly with csn-1, csn-2, csn-3 and csn-6. Interacts with itself.

The protein resides in the cytoplasm. It is found in the nucleus. Functionally, component of the COP9 signalosome complex (CSN), a complex involved in various cellular and developmental processes. The CSN complex is an essential regulator of the ubiquitin (Ubl) conjugation pathway by mediating the deneddylation of the cullin subunits of the SCF-type E3 ligase complexes, leading to decrease the Ubl ligase activity of SCF. The CSN complex plays an essential role in embryogenesis and oogenesis and is required to regulate microtubule stability in the early embryo. Mediates mei-3/katanin targeting for degradation at the meiosis to mitosis transition via deneddylation of cul-3. This chain is COP9 signalosome complex subunit 4 (csn-4), found in Caenorhabditis elegans.